The primary structure comprises 190 residues: Holliday junction branch migration complex subunit RuvA (190 aa).

The tract at residues 1–64 is domain I; sequence MIGKLSGTLD…EDAQILYGFA (64 aa). Positions 65 to 137 are domain II; sequence TSQERAAFRE…LKGKLGPDIG (73 aa). Residues 137 to 141 form a flexible linker region; it reads GVAAS. Residues 142-190 form a domain III region; that stretch reads VANDSQADILQALLALGYSDKEAAAALKALPSDVGVSEGIRLALRALGK.

The protein belongs to the RuvA family. Homotetramer. Forms an RuvA(8)-RuvB(12)-Holliday junction (HJ) complex. HJ DNA is sandwiched between 2 RuvA tetramers; dsDNA enters through RuvA and exits via RuvB. An RuvB hexamer assembles on each DNA strand where it exits the tetramer. Each RuvB hexamer is contacted by two RuvA subunits (via domain III) on 2 adjacent RuvB subunits; this complex drives branch migration. In the full resolvosome a probable DNA-RuvA(4)-RuvB(12)-RuvC(2) complex forms which resolves the HJ.

It localises to the cytoplasm. The RuvA-RuvB-RuvC complex processes Holliday junction (HJ) DNA during genetic recombination and DNA repair, while the RuvA-RuvB complex plays an important role in the rescue of blocked DNA replication forks via replication fork reversal (RFR). RuvA specifically binds to HJ cruciform DNA, conferring on it an open structure. The RuvB hexamer acts as an ATP-dependent pump, pulling dsDNA into and through the RuvAB complex. HJ branch migration allows RuvC to scan DNA until it finds its consensus sequence, where it cleaves and resolves the cruciform DNA. This is Holliday junction branch migration complex subunit RuvA from Albidiferax ferrireducens (strain ATCC BAA-621 / DSM 15236 / T118) (Rhodoferax ferrireducens).